Reading from the N-terminus, the 229-residue chain is Type-5 uracil-DNA glycosylase (229 aa).

Residues cysteine 19, cysteine 22, cysteine 123, and cysteine 138 each contribute to the [4Fe-4S] cluster site.

The protein belongs to the uracil-DNA glycosylase (UDG) superfamily. Type 5 (UDGb) family.

In terms of biological role, DNA glycosylase with broad substrate specificity. This chain is Type-5 uracil-DNA glycosylase, found in Mycobacterium leprae (strain TN).